Reading from the N-terminus, the 743-residue chain is MAEVSGAALSQAGWYLSDEGVEACTSSPGKGSINDIILIALNTDLRTIGKKFLPSDINGGKVEKLEGPCVLQIQKVRNVAAPKDNEESQAAPRMLRVQMTDGHTSCTAVEFSYISKISLNTPPGTKVKLSGTVDIKNGFLLLSDSNTTVLGGEVEHLIDKWALQRSLLKHNRSNIGAEGGPPPFLPFGQKCASNVQVDSRELDRRKTLQVSLPAKPANDNDEFEKQRTAAIAEVAKSKETKTFGGGGGGARSNLNIGAAGHRNREVLQKEKASKSESKNEGVYRELVDEKALKHITEMGFSKEASRQALMDNANNLEAALNVLLNSSKQKPAVGPPARGRGKGRGRGRSEDEEDLGTARPSAPSTLFDFLESKMGTLNVEEPKSQPQHLHQGQHRGWNAEQNGMKDGTQSRHLPRNDTRQPRNERPPRFQKDTPTSKSTVENSVLSRNRGSERPSSSSGSDVWAEERIKCDRPYSRYDRTKDASHPLGLQHNDGAFKKRENSMQNRPGRGPLYAEAKENPLPPEFVDYNNQRRGRRENQTGHPDHCYERKPRTMNSEAVSGLKIEKHFSVNTDYPRPVQSNSLGVPNGETAPPLKGRRVGPIKSAGPVTAVPYDDKIFYNSGPKRRSGPIKPEKVIESSIPVEYAKVWKPGDECFALYWEDNKFYRAEVEALHSSGMTAVVKFTDYGNYEEVLLSNIKPVQTEAWEEEGTYDHTIEFRRGGDGQPRRSTRPTQQFYQPPRARN.

Residues 241–262 (KTFGGGGGGARSNLNIGAAGHR) are disordered. One can recognise a UBA domain in the interval 286 to 326 (LVDEKALKHITEMGFSKEASRQALMDNANNLEAALNVLLNS). Disordered stretches follow at residues 327 to 365 (SKQK…APST) and 380 to 549 (EEPK…CYER). Residue S349 is modified to Phosphoserine. Over residues 414-431 (PRNDTRQPRNERPPRFQK) the composition is skewed to basic and acidic residues. A compositionally biased stretch (polar residues) spans 432–445 (DTPTSKSTVENSVL). S438 is modified (phosphoserine). Composition is skewed to basic and acidic residues over residues 464 to 484 (AEER…KDAS) and 536 to 549 (RENQ…CYER). K563 participates in a covalent cross-link: Glycyl lysine isopeptide (Lys-Gly) (interchain with G-Cter in SUMO2). The interval 572–603 (TDYPRPVQSNSLGVPNGETAPPLKGRRVGPIK) is disordered. In terms of domain architecture, Tudor spans 647–707 (VWKPGDECFA…KPVQTEAWEE (61 aa)). The segment covering 711 to 725 (YDHTIEFRRGGDGQP) has biased composition (basic and acidic residues). The segment at 711-743 (YDHTIEFRRGGDGQPRRSTRPTQQFYQPPRARN) is disordered. The tract at residues 723–743 (GQPRRSTRPTQQFYQPPRARN) is EBM motif; may mediate interaction with the EJC.

Component of mRNA stress granules. Interacts with FMR1, FXR1, FXR2, EWSR1, FUS, SERBP1, EEF1A1 and DDX3X or DDX3Y, and with the small nuclear ribonucleoprotein-associated proteins SNRPB and SNRPN. Interacts with 'Lys-48'-linked tetra-ubiquitin, but not with monoubiquitin or 'Lys-63'-linked ubiquitin chains. May interact with the exon junction complex (EJC) composed at least of CASC3, EIF4A3, MAGOH and RBM8A. Interacts with POLR2A (via the C-terminal domain (CTD)).

Its subcellular location is the cytoplasm. The protein localises to the nucleus. Functionally, scaffolding protein that specifically recognizes and binds dimethylarginine-containing proteins. Plays a role in the regulation of translation of target mRNAs by binding Arg/Gly-rich motifs (GAR) in dimethylarginine-containing proteins. In nucleus, acts as a coactivator: recognizes and binds asymmetric dimethylation on the core histone tails associated with transcriptional activation (H3R17me2a and H4R3me2a) and recruits proteins at these arginine-methylated loci. In cytoplasm, acts as an antiviral factor that participates in the assembly of stress granules together with G3BP1. This is Tudor domain-containing protein 3 (Tdrd3) from Mus musculus (Mouse).